Reading from the N-terminus, the 258-residue chain is Aspartate/glutamate leucyltransferase (258 aa).

It belongs to the R-transferase family. Bpt subfamily.

It localises to the cytoplasm. It catalyses the reaction N-terminal L-glutamyl-[protein] + L-leucyl-tRNA(Leu) = N-terminal L-leucyl-L-glutamyl-[protein] + tRNA(Leu) + H(+). The enzyme catalyses N-terminal L-aspartyl-[protein] + L-leucyl-tRNA(Leu) = N-terminal L-leucyl-L-aspartyl-[protein] + tRNA(Leu) + H(+). Its function is as follows. Functions in the N-end rule pathway of protein degradation where it conjugates Leu from its aminoacyl-tRNA to the N-termini of proteins containing an N-terminal aspartate or glutamate. The sequence is that of Aspartate/glutamate leucyltransferase from Bradyrhizobium diazoefficiens (strain JCM 10833 / BCRC 13528 / IAM 13628 / NBRC 14792 / USDA 110).